Consider the following 111-residue polypeptide: MEAKFAHIILFFLLAFSFETLMARKESDGPEVIKLLKEFESDSRCKGKQFWPELIGVPALYAKGIIEKENPSITNIPILLNGSPVTKDFRCDRVRLFVNILGDVVQIPRVT.

The first 23 residues, 1 to 23, serve as a signal peptide directing secretion; sequence MEAKFAHIILFFLLAFSFETLMA. Residues 24–36 constitute a propeptide that is removed on maturation; it reads RKESDGPEVIKLL.

This sequence belongs to the protease inhibitor I13 (potato type I serine protease inhibitor) family.

Its subcellular location is the secreted. The chain is Wound-induced proteinase inhibitor 1 from Solanum peruvianum (Peruvian tomato).